A 63-amino-acid polypeptide reads, in one-letter code: Cecropin-B (63 aa).

The signal sequence occupies residues 1-22; it reads MNFAKILSFVFALVLALSMTSA. The propeptide at 23–26 is removed by a dipeptidylpeptidase; it reads APEP. Residue lysine 47 is modified to 5-hydroxylysine; partial. Isoleucine 61 bears the Isoleucine amide mark.

It belongs to the cecropin family. In terms of processing, lepidopteran-B differs from lepidopteran-A by its hydroxylated residue. Highest expression in fat body and hemocytes. Is also expressed in Malpighian tubules and to a much lesser extent in midgut. Not present in silk gland.

The protein resides in the secreted. Its function is as follows. Cecropins have lytic and antibacterial activity against several Gram-positive and Gram-negative bacteria. In Bombyx mori (Silk moth), this protein is Cecropin-B (CECB1).